A 561-amino-acid chain; its full sequence is Dihydroxy-acid dehydratase (561 aa).

C51 contacts [2Fe-2S] cluster. Position 83 (D83) interacts with Mg(2+). C124 contributes to the [2Fe-2S] cluster binding site. Residues D125 and K126 each coordinate Mg(2+). Residue K126 is modified to N6-carboxylysine. C196 is a binding site for [2Fe-2S] cluster. E448 contacts Mg(2+). S474 functions as the Proton acceptor in the catalytic mechanism.

It belongs to the IlvD/Edd family. Homodimer. The cofactor is [2Fe-2S] cluster. It depends on Mg(2+) as a cofactor.

The catalysed reaction is (2R)-2,3-dihydroxy-3-methylbutanoate = 3-methyl-2-oxobutanoate + H2O. It carries out the reaction (2R,3R)-2,3-dihydroxy-3-methylpentanoate = (S)-3-methyl-2-oxopentanoate + H2O. It functions in the pathway amino-acid biosynthesis; L-isoleucine biosynthesis; L-isoleucine from 2-oxobutanoate: step 3/4. Its pathway is amino-acid biosynthesis; L-valine biosynthesis; L-valine from pyruvate: step 3/4. In terms of biological role, functions in the biosynthesis of branched-chain amino acids. Catalyzes the dehydration of (2R,3R)-2,3-dihydroxy-3-methylpentanoate (2,3-dihydroxy-3-methylvalerate) into 2-oxo-3-methylpentanoate (2-oxo-3-methylvalerate) and of (2R)-2,3-dihydroxy-3-methylbutanoate (2,3-dihydroxyisovalerate) into 2-oxo-3-methylbutanoate (2-oxoisovalerate), the penultimate precursor to L-isoleucine and L-valine, respectively. In Pyrobaculum neutrophilum (strain DSM 2338 / JCM 9278 / NBRC 100436 / V24Sta) (Thermoproteus neutrophilus), this protein is Dihydroxy-acid dehydratase.